Here is a 365-residue protein sequence, read N- to C-terminus: G-protein coupled receptor 68 (365 aa).

The Extracellular portion of the chain corresponds to 1-12; it reads MGNITTENSSLS. N3 and N8 each carry an N-linked (GlcNAc...) asparagine glycan. A helical membrane pass occupies residues 13–49; that stretch reads CPIDHTIHQTLAPVVYVTVLVVGFPANCLSLYFGYLQ. Cystine bridges form between C13-C258 and C94-C172. Residues 50-53 are Cytoplasmic-facing; the sequence is IKAR. A helical membrane pass occupies residues 54–84; the sequence is NELGVYLCNLTIADLFYICSLPFWLQYVLQH. Residues 85 to 89 lie on the Extracellular side of the membrane; the sequence is DDWSH. A helical membrane pass occupies residues 90 to 125; it reads GDLSCQVCGILLYENIYISVGFLCCISIDRYLAVAH. Topologically, residues 126-133 are cytoplasmic; that stretch reads PFRFHQFR. The chain crosses the membrane as a helical span at residues 134–160; the sequence is TLKAAVGVSVLIWAKELLTSIYFLNHK. At 161 to 176 the chain is on the extracellular side; that stretch reads EVIEDEDQHRVCFEHY. Residues 161–176 form an extracellular loop 2 (ECL2) region; that stretch reads EVIEDEDQHRVCFEHY. Residues 177 to 214 form a helical membrane-spanning segment; that stretch reads PIQAWQRSINYYRFLVGFLFPICLLLASYQGILRAVRR. The Cytoplasmic segment spans residues 215 to 218; it reads SHGT. Residues 219–254 form a helical membrane-spanning segment; sequence QKSRKDQIQRLVLSTVVIFLACFLPYHVLLLVRSLW. At 255-260 the chain is on the extracellular side; the sequence is ERNCEF. A helical transmembrane segment spans residues 261 to 289; sequence AKSIFNVYHFSLLLTSFNCVADPVLYCFV. Topologically, residues 290–365 are cytoplasmic; the sequence is SETTHRDLAR…VGGPSTVGLA (76 aa).

It belongs to the G-protein coupled receptor 1 family. As to expression, expressed in the lung, testis, heart, brain, spleen, thymus, brown fat, small intestine, colon, peripheral blood leukocytes, macrophages, stomach, ovary and white fat but not in the liver, kidney, and skeletal muscle. Expression in the prostate is weak but detectable. Specifically expressed in endothelial cells of small-diameter resistance arteries.

The protein localises to the cell membrane. Its activity is regulated as follows. Activated by a network of residues that connects an extracellular-facing cavity to Glu-149, a conserved charged residue buried in the transmembrane core of the receptor. Protonation likely drives conformational changes in extracellular loop 2 (ECL2), which stabilizes movement of transmembrane 3 (TM3) and a series of rearrangements that connect the extracellular-facing cavity to Glu-149, a residue only conserved in proton-sensing G-protein coupled receptors. Activated in an allosteric manner by divalent metal ions at the extracellular surface following the order: Cd(2+) &gt; Co(2+) &gt; Ni(2+) &gt; Zn(2+) &gt; Fe(2+) &gt; Ca(2+) &gt; Mg(2+). Activated by ogerin (ZINC67740571), a selective GPR68 positive allosteric modulator. Inhibited by small molecule GPR68-I, decreasing inflammation in models of colitis. Functionally, proton-sensing G-protein coupled receptor activated by extracellular pH, which is required to monitor pH changes and generate adaptive reactions. The receptor is almost silent at pH 7.8 but fully activated at pH 6.8. Ligand binding causes a conformation change that triggers signaling via guanine nucleotide-binding proteins (G proteins) and modulates the activity of downstream effectors, such as phospholipase C. GPR68 is mainly coupled to G(q) G proteins and mediates production of diacylglycerol (DAG) and inositol 1,4,5-trisphosphate (IP3). Acts as a key mechanosensor of fluid shear stress and membrane stretch. Expressed in endothelial cells of small-diameter resistance arteries, where it mediates flow-induced dilation in response to shear stress. May represents an osteoblastic pH sensor regulating cell-mediated responses to acidosis in bone. Acts as a regulator of calcium-sensing receptor CASR in a seesaw manner: GPR68-mediated signaling inhibits CASR signaling in response to protons, while CASR inhibits GPR68 in presence of extracellular calcium. Also functions as a metastasis suppressor gene in prostate cancer. In Mus musculus (Mouse), this protein is G-protein coupled receptor 68.